Consider the following 142-residue polypeptide: Large ribosomal subunit protein uL22c (142 aa).

The protein belongs to the universal ribosomal protein uL22 family. Part of the 50S ribosomal subunit.

The protein localises to the plastid. It is found in the chloroplast. Its function is as follows. This protein binds specifically to 23S rRNA. Functionally, the globular domain of the protein is located near the polypeptide exit tunnel on the outside of the subunit, while an extended beta-hairpin is found that lines the wall of the exit tunnel in the center of the 70S ribosome. The chain is Large ribosomal subunit protein uL22c (rpl22) from Picea abies (Norway spruce).